A 605-amino-acid polypeptide reads, in one-letter code: Exonuclease V, mitochondrial (605 aa).

Residues 1 to 17 (MSLNFLKRYLSRSTRNF) constitute a mitochondrion transit peptide. 4 residues coordinate [4Fe-4S] cluster: cysteine 140, cysteine 563, cysteine 566, and cysteine 572.

The protein belongs to the EXO5 family. As to quaternary structure, monomer. Requires Mg(2+) as cofactor. The cofactor is [4Fe-4S] cluster.

The protein resides in the mitochondrion. Functionally, single strand DNA specific 5' exonuclease involved in mitochondrial DNA replication and recombination. Releases dinucleotides as main products of catalysis. Has the capacity to slide across 5'double-stranded DNA or 5'RNA sequences and resumes cutting two nucleotides downstream of the double-stranded-to-single-stranded junction or RNA-to-DNA junction, respectively. The polypeptide is Exonuclease V, mitochondrial (EXO5) (Candida tropicalis (strain ATCC MYA-3404 / T1) (Yeast)).